A 237-amino-acid polypeptide reads, in one-letter code: Pyridoxine 5'-phosphate synthase (237 aa).

Asn7 and Arg18 together coordinate 3-amino-2-oxopropyl phosphate. His43 functions as the Proton acceptor in the catalytic mechanism. Residues Arg45 and His50 each contribute to the 1-deoxy-D-xylulose 5-phosphate site. Residue Glu70 is the Proton acceptor of the active site. Thr100 contacts 1-deoxy-D-xylulose 5-phosphate. His190 functions as the Proton donor in the catalytic mechanism. Residues Asp191 and 213–214 contribute to the 3-amino-2-oxopropyl phosphate site; that span reads GH.

This sequence belongs to the PNP synthase family. In terms of assembly, homooctamer; tetramer of dimers.

It is found in the cytoplasm. It catalyses the reaction 3-amino-2-oxopropyl phosphate + 1-deoxy-D-xylulose 5-phosphate = pyridoxine 5'-phosphate + phosphate + 2 H2O + H(+). It participates in cofactor biosynthesis; pyridoxine 5'-phosphate biosynthesis; pyridoxine 5'-phosphate from D-erythrose 4-phosphate: step 5/5. Catalyzes the complicated ring closure reaction between the two acyclic compounds 1-deoxy-D-xylulose-5-phosphate (DXP) and 3-amino-2-oxopropyl phosphate (1-amino-acetone-3-phosphate or AAP) to form pyridoxine 5'-phosphate (PNP) and inorganic phosphate. The sequence is that of Pyridoxine 5'-phosphate synthase from Bacteroides thetaiotaomicron (strain ATCC 29148 / DSM 2079 / JCM 5827 / CCUG 10774 / NCTC 10582 / VPI-5482 / E50).